Consider the following 354-residue polypeptide: Rhodopsin (354 aa).

Over 1 to 36 (MNGTEGPYFYIPMVNTTGIVRSPYEYPQYYLVNPAA) the chain is Extracellular. 2 N-linked (GlcNAc...) asparagine glycosylation sites follow: asparagine 2 and asparagine 15. The helical transmembrane segment at 37 to 61 (YAALGAYMFFLILLGFPINFLTLYV) threads the bilayer. At 62 to 73 (TLEHKKLRTPLN) the chain is on the cytoplasmic side. Residues 74–96 (YILLNLAVADLFMVFGGFTTTMY) traverse the membrane as a helical segment. Residues 97-110 (TSMHGYFVLGRLGC) lie on the Extracellular side of the membrane. The cysteines at positions 110 and 187 are disulfide-linked. The chain crosses the membrane as a helical span at residues 111–133 (NLEGFFATLGGEIGLWSLVVLAI). The 'Ionic lock' involved in activated form stabilization motif lies at 134-136 (ERW). Over 134 to 152 (ERWVVVCKPISNFRFGENH) the chain is Cytoplasmic. A helical membrane pass occupies residues 153-173 (AIMGLAFTWIMACACAVPPLV). The Extracellular portion of the chain corresponds to 174 to 202 (GWSRYIPEGMQCSCGVDYYTRAEGFNNES). An N-linked (GlcNAc...) asparagine glycan is attached at asparagine 200. The chain crosses the membrane as a helical span at residues 203–224 (FVVYMFTCHFCIPLTIIGFCYG). Over 225 to 252 (RLLCAVKEAAAAQQESETTQRAEREVTR) the chain is Cytoplasmic. The helical transmembrane segment at 253-274 (MVILMVVGFLVCWLPYASVAWY) threads the bilayer. Residues 275–286 (IFSNQGSQFGPL) lie on the Extracellular side of the membrane. A helical membrane pass occupies residues 287-308 (FMTIPAFFAKSSSVYNPMIYIC). Lysine 296 carries the N6-(retinylidene)lysine modification. Topologically, residues 309-354 (MNKQFRHCMITTLCCGKNPFEEEEGASTTASKTEASSVSSSSVSPA) are cytoplasmic. S-palmitoyl cysteine attachment occurs at residues cysteine 322 and cysteine 323. Residues 333 to 354 (GASTTASKTEASSVSSSSVSPA) form a disordered region. The span at 334-354 (ASTTASKTEASSVSSSSVSPA) shows a compositional bias: low complexity.

This sequence belongs to the G-protein coupled receptor 1 family. Opsin subfamily. Phosphorylated on some or all of the serine and threonine residues present in the C-terminal region. In terms of processing, contains one covalently linked retinal chromophore.

It localises to the membrane. Its subcellular location is the cell projection. The protein resides in the cilium. The protein localises to the photoreceptor outer segment. Its function is as follows. Photoreceptor required for image-forming vision at low light intensity. While most salt water fish species use retinal as chromophore, most freshwater fish use 3-dehydroretinal, or a mixture of retinal and 3-dehydroretinal. Light-induced isomerization of 11-cis to all-trans retinal triggers a conformational change that activates signaling via G-proteins. Subsequent receptor phosphorylation mediates displacement of the bound G-protein alpha subunit by arrestin and terminates signaling. This chain is Rhodopsin (rho), found in Salaria pavo (Peacock blenny).